A 444-amino-acid chain; its full sequence is Exodeoxyribonuclease 7 large subunit (444 aa).

It belongs to the XseA family. Heterooligomer composed of large and small subunits.

The protein localises to the cytoplasm. The enzyme catalyses Exonucleolytic cleavage in either 5'- to 3'- or 3'- to 5'-direction to yield nucleoside 5'-phosphates.. Functionally, bidirectionally degrades single-stranded DNA into large acid-insoluble oligonucleotides, which are then degraded further into small acid-soluble oligonucleotides. The sequence is that of Exodeoxyribonuclease 7 large subunit from Rickettsia akari (strain Hartford).